Reading from the N-terminus, the 418-residue chain is Actin-related protein 3 (418 aa).

Belongs to the actin family. ARP3 subfamily. As to quaternary structure, component of the Arp2/3 complex composed of actr2/arp2, actr3/arp3, arpc1b, arpc2, arpc3, arpc4 and arpc5.

It is found in the cytoplasm. It localises to the cytoskeleton. The protein localises to the cell projection. The protein resides in the nucleus. Its function is as follows. ATP-binding component of the Arp2/3 complex, a multiprotein complex that mediates actin polymerization upon stimulation by nucleation-promoting factor (NPF). The Arp2/3 complex mediates the formation of branched actin networks in the cytoplasm, providing the force for cell motility. Seems to contact the pointed end of the daughter actin filament. In addition to its role in the cytoplasmic cytoskeleton, the Arp2/3 complex also promotes actin polymerization in the nucleus, thereby regulating gene transcription and repair of damaged DNA. The Arp2/3 complex promotes homologous recombination (HR) repair in response to DNA damage by promoting nuclear actin polymerization, leading to drive motility of double-strand breaks (DSBs). The chain is Actin-related protein 3 (actr3) from Takifugu rubripes (Japanese pufferfish).